Consider the following 199-residue polypeptide: Peroxiredoxin-1 (199 aa).

At S2 the chain carries N-acetylserine. Residues A6 to F165 enclose the Thioredoxin domain. At K7 the chain carries N6-acetyllysine; alternate. K7 is covalently cross-linked (Glycyl lysine isopeptide (Lys-Gly) (interchain with G-Cter in SUMO2); alternate). K16 and K27 each carry N6-acetyllysine. Residue S32 is modified to Phosphoserine. K35 carries the N6-acetyllysine; alternate modification. K35 carries the post-translational modification N6-succinyllysine; alternate. The active-site Cysteine sulfenic acid (-SOH) intermediate is the C52. Residue T90 is modified to Phosphothreonine. Residue K120 forms a Glycyl lysine isopeptide (Lys-Gly) (interchain with G-Cter in SUMO2) linkage. At K136 the chain carries N6-acetyllysine. A disordered region spans residues G176 to K199. The segment covering I184–K199 has biased composition (basic and acidic residues). K185 participates in a covalent cross-link: Glycyl lysine isopeptide (Lys-Gly) (interchain with G-Cter in SUMO1). K197 carries the N6-acetyllysine modification.

This sequence belongs to the peroxiredoxin family. AhpC/Prx1 subfamily. In terms of assembly, homodimer; disulfide-linked, upon oxidation. 5 homodimers assemble to form a ring-like decamer. Interacts with GDPD5; forms a mixed-disulfide with GDPD5. Interacts with SESN1 and SESN2. Interacts with FAM107A. In terms of processing, phosphorylated on Thr-90 during the M-phase, which leads to a decrease in enzymatic activity. Acetylation increases reducing activity and resistance to superoxidation. Deacetylated by HDAC6 which decreases reducing activity. Detected in heart and skeletal muscle (at protein level).

Its subcellular location is the cytoplasm. It catalyses the reaction a hydroperoxide + [thioredoxin]-dithiol = an alcohol + [thioredoxin]-disulfide + H2O. In terms of biological role, thiol-specific peroxidase that catalyzes the reduction of hydrogen peroxide and organic hydroperoxides to water and alcohols, respectively. Plays a role in cell protection against oxidative stress by detoxifying peroxides and as sensor of hydrogen peroxide-mediated signaling events. Might participate in the signaling cascades of growth factors and tumor necrosis factor-alpha by regulating the intracellular concentrations of H(2)O(2). Reduces an intramolecular disulfide bond in GDPD5 that gates the ability to GDPD5 to drive postmitotic motor neuron differentiation. The protein is Peroxiredoxin-1 (PRDX1) of Myotis lucifugus (Little brown bat).